The following is a 422-amino-acid chain: Cytochrome P-450 monooxygenase DoxA (422 aa).

Residue Cys369 participates in heme binding.

It belongs to the cytochrome P450 family. Monomer. Requires heme as cofactor.

It is found in the cytoplasm. The enzyme catalyses 13-deoxydaunorubicin + NADPH + O2 + H(+) = 13-dihydrodaunorubicin + NADP(+) + H2O. The catalysed reaction is 13-dihydrodaunorubicin + NADPH + O2 + H(+) = daunorubicin + NADP(+) + 2 H2O. It catalyses the reaction 13-deoxycarminomycin + NADPH + O2 + H(+) = 13-dihydrocarminomycin + NADP(+) + H2O. It carries out the reaction 13-dihydrocarminomycin + NADPH + O2 + H(+) = carminomycin + NADP(+) + 2 H2O. It functions in the pathway antibiotic biosynthesis; daunorubicin biosynthesis. The protein operates within antibiotic biosynthesis; carminomycin biosynthesis. With respect to regulation, strongly inhibited by dithiothreitol and high ionic strength buffers. Involved in the biosynthesis of the anthracyclines carminomycin and daunorubicin (daunomycin) which are aromatic polyketide antibiotics that exhibit high cytotoxicity and are widely applied in the chemotherapy of a variety of cancers. In vivo, DoxA catalyzes the C-13 hydroxylation of 13-deoxycarminomycin and 13-deoxydaunorubicin to yield 13-dihydrocarminomycin and 13-dihydrodaunorubicin, respectively, as well as the oxidation of these 13-dihydro-anthracyclines to their respective 13-keto forms, carminomycin and daunorubicin. In vitro, it also catalyzes the C-14 hydroxylation of daunorubicin to form doxorubicin (adriamycin), although this strain is not a doxorubicin producer. It is not able to accept anthracyclinones (aglycones) and anthracyclines with a 10-carbomethoxyl moiety. 13-oxidation of the anthracyclines possessing the 4-methoxy substitution is greatly favored. The anthracycline analog desacetyladriamycin can be oxidized to 10-hydroxydesacetyladriamycin. It can only use NADP. DoxA acts jointly with DauV. This chain is Cytochrome P-450 monooxygenase DoxA (doxA), found in Streptomyces sp. (strain C5).